A 223-amino-acid polypeptide reads, in one-letter code: ATP-dependent dethiobiotin synthetase BioD (223 aa).

Thr-16 is a binding site for Mg(2+). Lys-37 is an active-site residue. Substrate is bound at residue Ser-41. Mg(2+) contacts are provided by Asp-50 and Glu-111. Residues Asp-50, 111–114, and 171–172 contribute to the ATP site; these read EGAG and NR.

It belongs to the dethiobiotin synthetase family. As to quaternary structure, homodimer. The cofactor is Mg(2+).

It localises to the cytoplasm. It carries out the reaction (7R,8S)-7,8-diammoniononanoate + CO2 + ATP = (4R,5S)-dethiobiotin + ADP + phosphate + 3 H(+). The protein operates within cofactor biosynthesis; biotin biosynthesis; biotin from 7,8-diaminononanoate: step 1/2. Functionally, catalyzes a mechanistically unusual reaction, the ATP-dependent insertion of CO2 between the N7 and N8 nitrogen atoms of 7,8-diaminopelargonic acid (DAPA, also called 7,8-diammoniononanoate) to form a ureido ring. The protein is ATP-dependent dethiobiotin synthetase BioD of Anaeromyxobacter sp. (strain K).